A 398-amino-acid polypeptide reads, in one-letter code: Phosphopentomutase (398 aa).

Residues Asp13, Asp290, His295, Asp331, His332, and His343 each coordinate Mn(2+).

It belongs to the phosphopentomutase family. The cofactor is Mn(2+).

Its subcellular location is the cytoplasm. The catalysed reaction is 2-deoxy-alpha-D-ribose 1-phosphate = 2-deoxy-D-ribose 5-phosphate. It carries out the reaction alpha-D-ribose 1-phosphate = D-ribose 5-phosphate. The protein operates within carbohydrate degradation; 2-deoxy-D-ribose 1-phosphate degradation; D-glyceraldehyde 3-phosphate and acetaldehyde from 2-deoxy-alpha-D-ribose 1-phosphate: step 1/2. Functionally, isomerase that catalyzes the conversion of deoxy-ribose 1-phosphate (dRib-1-P) and ribose 1-phosphate (Rib-1-P) to deoxy-ribose 5-phosphate (dRib-5-P) and ribose 5-phosphate (Rib-5-P), respectively. The protein is Phosphopentomutase of Clostridium tetani (strain Massachusetts / E88).